Here is a 1014-residue protein sequence, read N- to C-terminus: Disease resistance protein RGA4 (1014 aa).

Positions 1–182 (MEAALLSGFI…PRIHEADLVG (182 aa)) are structured coiled coil (CC) domain. Residues 105–145 (RTVRATKKLLQTNQHLAQELQRLKRMVEEANQRKQRYTAAA) are a coiled coil. In terms of domain architecture, NB-ARC spans 189–466 (ELLEQLAERQ…WLAEGFVEPV (278 aa)). LRR repeat units follow at residues 484-506 (RNII…TYGM), 507-530 (MREF…DKFL), 531-552 (PKYV…NFNG), 580-602 (LRVL…ICNL), 603-624 (VLLK…IAKL), 625-647 (KDLE…VFGL), 701-725 (MNKL…DLRE), 762-784 (PCYL…VTSL), 785-807 (RGLK…ALSN), 808-833 (LSYL…GFPR), and 854-877 (LPFL…KIEC).

Belongs to the disease resistance NB-LRR family. Expressed in leaves.

Probable disease resistance protein. Resistance proteins guard the plant against pathogens that contain an appropriate avirulence protein via an indirect interaction with this avirulence protein. That triggers a defense system including the hypersensitive response, which restricts the pathogen growth. At the opposite of cultivars Aichi asahi and Sasanishiki, the cultivars Nipponbare, Mokoto and Hitomebore don't recognize the effector avirulence protein AVR-Pia from M.oryzae. This chain is Disease resistance protein RGA4, found in Oryza sativa subsp. japonica (Rice).